A 955-amino-acid polypeptide reads, in one-letter code: Protein translocase subunit SecA (955 aa).

ATP is bound by residues glutamine 90, 108 to 112, and aspartate 509; that span reads GEGKT. The interval 537 to 571 is disordered; the sequence is EGHRPPVPLQRSGAEGGGGFAAKAAPASGPHGHAP. The segment covering 557–571 has biased composition (low complexity); the sequence is AAKAAPASGPHGHAP.

The protein belongs to the SecA family. As to quaternary structure, monomer and homodimer. Part of the essential Sec protein translocation apparatus which comprises SecA, SecYEG and auxiliary proteins SecDF. Other proteins may also be involved.

It localises to the cell inner membrane. The protein resides in the cellular thylakoid membrane. Its subcellular location is the cytoplasm. It carries out the reaction ATP + H2O + cellular proteinSide 1 = ADP + phosphate + cellular proteinSide 2.. Its function is as follows. Part of the Sec protein translocase complex. Interacts with the SecYEG preprotein conducting channel. Has a central role in coupling the hydrolysis of ATP to the transfer of proteins into and across the cell membrane, serving as an ATP-driven molecular motor driving the stepwise translocation of polypeptide chains across the membrane. Functionally, probably participates in protein translocation into and across both the cytoplasmic and thylakoid membranes in cyanobacterial cells. This Synechococcus sp. (strain WH7803) protein is Protein translocase subunit SecA.